The following is a 142-amino-acid chain: 3-hydroxyacyl-[acyl-carrier-protein] dehydratase FabZ (142 aa).

The active site involves histidine 50.

The protein belongs to the thioester dehydratase family. FabZ subfamily.

It is found in the cytoplasm. It carries out the reaction a (3R)-hydroxyacyl-[ACP] = a (2E)-enoyl-[ACP] + H2O. Functionally, involved in unsaturated fatty acids biosynthesis. Catalyzes the dehydration of short chain beta-hydroxyacyl-ACPs and long chain saturated and unsaturated beta-hydroxyacyl-ACPs. The chain is 3-hydroxyacyl-[acyl-carrier-protein] dehydratase FabZ from Clostridium tetani (strain Massachusetts / E88).